The chain runs to 394 residues: MNSFSQVPPGFRFHPTDEELVDYYLRKKVASKRIEIDIIKDVDLYKIEPCDLQELCKIGNEEQSEWYFFSHKDKKYPTGTRTNRATKAGFWKATGRDKAIYIRHSLIGMRKTLVFYKGRAPNGQKSDWIMHEYRLETSENGTPQEEGWVVCRVFKKKLAATVRKMGDYHSSPSQHWYDDQLSFMASEIISSSPRQFLPNHHYNRHHHQQTLPCGLNAFNNNNPNLQCKQELELHYNQMVQHQQQNHHLRESMFLQLPQLESPTSNCNSDNNNNTRNISNLQKSSNISHEEQLQQGNQSFSSLYYDQGVEQMTTDWRVLDKFVASQLSNDEEAAAVVSSSSHQNNVKIDTRNTGYHVIDEGINLPENDSERVVEMGEEYSNAHAASTSSSCQIDL.

Residues V7–K156 form the NAC domain. A DNA-binding region spans residues I107 to V162.

The protein belongs to the plant vascular related NAC-domain protein family. Interacts with NAC083/VNI2. Detected in root vessels of protoxylems, outermost metaxylems, inner metaxylems, shoots and hypocotyls. Expressed in roots, hypocotyls, cotyledons and leaves. Expressed in developing xylems. Specifically expressed in vessels in the secondary xylem of the root-hypocotyl region, and in vessels but not in interfascicular fibers in stems.

The protein localises to the nucleus. Its function is as follows. Transcription activator that binds to the secondary wall NAC binding element (SNBE), 5'-(T/A)NN(C/T)(T/C/G)TNNNNNNNA(A/C)GN(A/C/T)(A/T)-3', in the promoter of target genes. Involved in xylem formation by promoting the expression of secondary wall-associated transcription factors and of genes involved in secondary wall biosynthesis and programmed cell death, genes driven by the secondary wall NAC binding element (SNBE). Triggers thickening of secondary walls. The polypeptide is NAC domain-containing protein 26 (Arabidopsis thaliana (Mouse-ear cress)).